The chain runs to 128 residues: Large ribosomal subunit protein eL32 (128 aa).

It belongs to the eukaryotic ribosomal protein eL32 family.

The sequence is that of Large ribosomal subunit protein eL32 (rpl32e) from Thermoplasma volcanium (strain ATCC 51530 / DSM 4299 / JCM 9571 / NBRC 15438 / GSS1).